A 475-amino-acid chain; its full sequence is MGFRFLDIVKPFTSLVPEVGQPDRKIPFREKVLWTAICLFIFLVCSQIPLYGIRSTDSSDPFYWAKVIMASNRGTLMELGISPIVTSGMVMQLLAGAKLIEIDQSVKADRDLFSAAQKLFGMLICVGQGVAYIWSGSYGDPAVLGFGNCFLIVLQLFFAGIIVMLLDELLQKGYGIGSGISLFIATNICETIVWKTFSPTTVSVGKGTEFEGAVIALFHLLLTRNDKVRALKEAFYRQNLPNITNLLATVLIFMVVIYFQGFRVDLPVKSTRVSGQQGTYPIKLFYTSNIPIILQSALVSNLYFISQLLYRRFPDNILVNLFGAWRTSEYSQQMIPVSGLTYYISSPNNMSAVLADPFHALFYITFMLTSCALFSKVWIEVSGSSARDVAKQLKDQQMTMKGHRDTSVIKELNRYIPTAAAFGGLCIGALTVVADFMGAIGSGTGILLAVTIIYQYFETFVKEQQELSGGIGGLF.

The Cytoplasmic segment spans residues 1 to 32 (MGFRFLDIVKPFTSLVPEVGQPDRKIPFREKV). A helical transmembrane segment spans residues 33–53 (LWTAICLFIFLVCSQIPLYGI). The Lumenal segment spans residues 54–75 (RSTDSSDPFYWAKVIMASNRGT). The helical transmembrane segment at 76-96 (LMELGISPIVTSGMVMQLLAG) threads the bilayer. Over 97–118 (AKLIEIDQSVKADRDLFSAAQK) the chain is Cytoplasmic. The chain crosses the membrane as a helical span at residues 119–139 (LFGMLICVGQGVAYIWSGSYG). Residues 140 to 145 (DPAVLG) are Lumenal-facing. Residues 146-166 (FGNCFLIVLQLFFAGIIVMLL) form a helical membrane-spanning segment. The Cytoplasmic segment spans residues 167 to 173 (DELLQKG). A helical transmembrane segment spans residues 174–194 (YGIGSGISLFIATNICETIVW). Topologically, residues 195-241 (KTFSPTTVSVGKGTEFEGAVIALFHLLLTRNDKVRALKEAFYRQNLP) are lumenal. The chain crosses the membrane as a helical span at residues 242 to 262 (NITNLLATVLIFMVVIYFQGF). Residues 263-289 (RVDLPVKSTRVSGQQGTYPIKLFYTSN) lie on the Cytoplasmic side of the membrane. Residues 290–310 (IPIILQSALVSNLYFISQLLY) form a helical membrane-spanning segment. Residues 311 to 353 (RRFPDNILVNLFGAWRTSEYSQQMIPVSGLTYYISSPNNMSAV) are Lumenal-facing. Residues 354 to 374 (LADPFHALFYITFMLTSCALF) traverse the membrane as a helical segment. At 375-411 (SKVWIEVSGSSARDVAKQLKDQQMTMKGHRDTSVIKE) the chain is on the cytoplasmic side. The helical transmembrane segment at 412 to 434 (LNRYIPTAAAFGGLCIGALTVVA) threads the bilayer. Residues 435 to 440 (DFMGAI) are Lumenal-facing. The helical transmembrane segment at 441–461 (GSGTGILLAVTIIYQYFETFV) threads the bilayer. Residues 462 to 475 (KEQQELSGGIGGLF) lie on the Cytoplasmic side of the membrane.

The protein belongs to the SecY/SEC61-alpha family. In terms of assembly, heterotrimeric complex composed of SEC61-alpha, SEC61-beta and SEC61-gamma.

The protein resides in the endoplasmic reticulum membrane. Appears to play a crucial role in the insertion of secretory and membrane polypeptides into the ER. It is required for assembly of membrane and secretory proteins. Found to be tightly associated with membrane-bound ribosomes, either directly or through adaptor proteins. The polypeptide is Protein transport protein Sec61 subunit alpha (sec61a) (Dictyostelium discoideum (Social amoeba)).